The chain runs to 913 residues: Vacuolar membrane protease (913 aa).

The Cytoplasmic segment spans residues 1–15 (MMANYFRSTFKFRKT). The chain crosses the membrane as a helical span at residues 16–36 (TVSTLFVLTVLVISILTWFDA). Over 37–364 (NKYKSNLPDD…FFVVSARQLY (328 aa)) the chain is Vacuolar. Asn-117 carries an N-linked (GlcNAc...) asparagine glycan. Zn(2+)-binding residues include His-152 and Asp-164. Residue Glu-196 is the Proton acceptor of the active site. The Zn(2+) site is built by Glu-197, Glu-222, and His-296. The chain crosses the membrane as a helical span at residues 365 to 385 (VWNIVLLCVLPITLILLRIVC). Residues 386 to 394 (NKLGTWRMP) are Cytoplasmic-facing. The helical transmembrane segment at 395–415 (TSALFTRIPFALFVSSFTIYF) threads the bilayer. The Vacuolar portion of the chain corresponds to 416-431 (TKELLLQLNPTIWSRN). The chain crosses the membrane as a helical span at residues 432–452 (FILPFLFCISEFLLINTLVLA). The Cytoplasmic portion of the chain corresponds to 453–465 (LFEYLWPIQDFKT). A helical membrane pass occupies residues 466-486 (LSLLELSAIAWLFLLKCTWDL). Residues 487-494 (SSSGFKAT) are Vacuolar-facing. Residues 495-515 (GVYPVTVFYLFISLASMFGLC) traverse the membrane as a helical segment. Residues 516-600 (SMCFGKRPNA…TLNYDWSAQY (85 aa)) are Cytoplasmic-facing. Positions 540 to 552 (NDTHSIECPRQPE) are enriched in basic and acidic residues. The disordered stretch occupies residues 540–578 (NDTHSIECPRQPEDSETTETSPLINTPSSSVQSSPIASS). Residues 557–566 (TETSPLINTP) show a composition bias toward polar residues. Positions 567–578 (SSSVQSSPIASS) are enriched in low complexity. Residues 601–621 (LLAVPINAFLIWESLFNLFDA) form a helical membrane-spanning segment. Topologically, residues 622–634 (LSMTVQESNKATE) are vacuolar. A helical membrane pass occupies residues 635 to 655 (AVFKFAIYGAIFLCSPLLPFT). At 656–660 (TKLNR) the chain is on the cytoplasmic side. A helical transmembrane segment spans residues 661 to 681 (FVVIILGVVTILAASFSLFAA). The Vacuolar portion of the chain corresponds to 682–913 (PYTELAPLKL…MVTIHKYLEL (232 aa)). N-linked (GlcNAc...) asparagine glycans are attached at residues Asn-729, Asn-794, and Asn-810.

This sequence belongs to the peptidase M28 family. It depends on Zn(2+) as a cofactor.

It is found in the vacuole membrane. In terms of biological role, may be involved in vacuolar sorting and osmoregulation. This chain is Vacuolar membrane protease, found in Kluyveromyces lactis (strain ATCC 8585 / CBS 2359 / DSM 70799 / NBRC 1267 / NRRL Y-1140 / WM37) (Yeast).